A 216-amino-acid polypeptide reads, in one-letter code: MOB kinase activator-like 2A (216 aa).

4 residues coordinate Zn(2+): Cys-81, Cys-86, His-162, and His-167.

The protein belongs to the MOB1/phocein family.

Its subcellular location is the nucleus. The sequence is that of MOB kinase activator-like 2A from Arabidopsis thaliana (Mouse-ear cress).